The following is a 239-amino-acid chain: MILIEHILGNVKKDPVWQAKLKDATFDLLVLDQREAQKSRCRKLSTQGLDLGISLDRHVVLADGDVLAWDEKTNVAVVVQINLRDVMVIDLSELKSRSPDELIKTCFELGHALGNQHWKAVTKNNEVYVPLTVATTMMDSVMRTHGFQHLPFRFVKGAEILPLLSNSEARLLFGGAEDTDTHVHVASPLDEPHGSGLHIHGIHSHGDGHSHSHDSHSHSHDSDHGHSHSHGDHDHDHKH.

A disordered region spans residues 185 to 239 (VASPLDEPHGSGLHIHGIHSHGDGHSHSHDSHSHSHDSDHGHSHSHGDHDHDHKH). The segment covering 204 to 239 (SHGDGHSHSHDSHSHSHDSDHGHSHSHGDHDHDHKH) has biased composition (basic and acidic residues).

The protein belongs to the UreE family.

Its subcellular location is the cytoplasm. Involved in urease metallocenter assembly. Binds nickel. Probably functions as a nickel donor during metallocenter assembly. This chain is Urease accessory protein UreE, found in Yersinia frederiksenii.